A 210-amino-acid chain; its full sequence is Na(+)-translocating NADH-quinone reductase subunit D (210 aa).

A run of 6 helical transmembrane segments spans residues 14-34 (PIVSNNPIALQVLGVCSALAV), 42-62 (LVMTIALTVVCAFSNLFISIL), 72-92 (IIVQMTIIASLVIVVDQVLQA), 103-123 (VFVGLIITNCIVMGRAEAYAM), 131-151 (FMDGIGNGIGYGAILLSVGFI), and 178-198 (NGLLLLPPSAFFLIGMLIWII).

It belongs to the NqrDE/RnfAE family. Composed of six subunits; NqrA, NqrB, NqrC, NqrD, NqrE and NqrF.

The protein resides in the cell inner membrane. The enzyme catalyses a ubiquinone + n Na(+)(in) + NADH + H(+) = a ubiquinol + n Na(+)(out) + NAD(+). NQR complex catalyzes the reduction of ubiquinone-1 to ubiquinol by two successive reactions, coupled with the transport of Na(+) ions from the cytoplasm to the periplasm. NqrA to NqrE are probably involved in the second step, the conversion of ubisemiquinone to ubiquinol. The chain is Na(+)-translocating NADH-quinone reductase subunit D from Shewanella halifaxensis (strain HAW-EB4).